Here is a 248-residue protein sequence, read N- to C-terminus: 3-deoxy-manno-octulosonate cytidylyltransferase (248 aa).

This sequence belongs to the KdsB family.

The protein resides in the cytoplasm. The catalysed reaction is 3-deoxy-alpha-D-manno-oct-2-ulosonate + CTP = CMP-3-deoxy-beta-D-manno-octulosonate + diphosphate. Its pathway is nucleotide-sugar biosynthesis; CMP-3-deoxy-D-manno-octulosonate biosynthesis; CMP-3-deoxy-D-manno-octulosonate from 3-deoxy-D-manno-octulosonate and CTP: step 1/1. It participates in bacterial outer membrane biogenesis; lipopolysaccharide biosynthesis. Functionally, activates KDO (a required 8-carbon sugar) for incorporation into bacterial lipopolysaccharide in Gram-negative bacteria. The sequence is that of 3-deoxy-manno-octulosonate cytidylyltransferase from Salmonella arizonae (strain ATCC BAA-731 / CDC346-86 / RSK2980).